A 274-amino-acid polypeptide reads, in one-letter code: MTEFTTLLQQGNAWFFIPSAILLGALHGLEPGHSKTMMAAFIIAIKGTIKQAVMLGLAATISHTAVVWLIAFGGMVISKRFTAQSAEPWLQLISAVIIISTAFWMFWRTWRGERNWLENMHGHDYEHHHHDHEHHHDHGHHHHHEHGEYQDAHARAHANDIKRRFDGREVTNWQILLFGLTGGLIPCPAAITVLLICIQLKALTLGATLVVSFSIGLALTLVTVGVGAAISVQQVAKRWSGFNTLAKRAPYFSSLLIGLVGVYMGVHGFMGIMR.

At 1-12 (MTEFTTLLQQGN) the chain is on the periplasmic side. The chain crosses the membrane as a helical span at residues 13 to 33 (AWFFIPSAILLGALHGLEPGH). Topologically, residues 34 to 56 (SKTMMAAFIIAIKGTIKQAVMLG) are cytoplasmic. Residues 57–77 (LAATISHTAVVWLIAFGGMVI) traverse the membrane as a helical segment. Residues 78–86 (SKRFTAQSA) lie on the Periplasmic side of the membrane. A helical transmembrane segment spans residues 87–107 (EPWLQLISAVIIISTAFWMFW). Residues 108 to 175 (RTWRGERNWL…DGREVTNWQI (68 aa)) are Cytoplasmic-facing. A disordered region spans residues 127–153 (HHHHDHEHHHDHGHHHHHEHGEYQDAH). Basic residues predominate over residues 129-144 (HHDHEHHHDHGHHHHH). Residues 176 to 196 (LLFGLTGGLIPCPAAITVLLI) traverse the membrane as a helical segment. Topologically, residues 197 to 209 (CIQLKALTLGATL) are periplasmic. A helical membrane pass occupies residues 210 to 230 (VVSFSIGLALTLVTVGVGAAI). At 231–251 (SVQQVAKRWSGFNTLAKRAPY) the chain is on the cytoplasmic side. A helical transmembrane segment spans residues 252-272 (FSSLLIGLVGVYMGVHGFMGI). Residues 273–274 (MR) lie on the Periplasmic side of the membrane.

Belongs to the NiCoT transporter (TC 2.A.52) family. RcnA subfamily.

It is found in the cell inner membrane. Functionally, efflux system for nickel and cobalt. The polypeptide is Nickel/cobalt efflux system RcnA (rcnA) (Escherichia coli (strain K12)).